A 1166-amino-acid chain; its full sequence is Folliculin-interacting protein 1 (1166 aa).

The uDENN FNIP1/2-type domain maps to 37-478 (FDPSQIRLIV…TVMPNGQPPI (442 aa)). Residues Ser-220, Ser-230, Ser-232, and Ser-261 each carry the phosphoserine; by AMPK modification. Thr-294 carries the post-translational modification Phosphothreonine. A Phosphoserine modification is found at Ser-296. Residues 486–1092 (SSQSVDMLAK…VSNLLHSTLQ (607 aa)) form the cDENN FNIP1/2-type domain. Ser-593 carries the post-translational modification Phosphoserine; by AMPK. The residue at position 594 (Ser-594) is a Phosphoserine. Positions 608 and 610 each coordinate Zn(2+). Positions 608-615 (CNCKYCSH) match the Cys degron motif. Positions 611–612 (KY) are KY-finger. 2 residues coordinate Zn(2+): Cys-613 and His-615. 2 positions are modified to phosphoserine: Ser-760 and Ser-763. 2 disordered regions span residues 781–817 (TKPLKEERGAIDQHQETKQTTKDQSGESDTQNMVSEE) and 912–956 (LVPH…HDMT). Composition is skewed to basic and acidic residues over residues 783-805 (PLKEERGAIDQHQETKQTTKDQS) and 915-925 (HGDKESSDKKI). Residues 929–1166 (TEWDIPRNES…HSPYVAQILL (238 aa)) form an interaction with HSP90AA1 region. Ser-938 bears the Phosphoserine; alternate; by CK2 mark. An O-linked (GlcNAc) serine; alternate glycan is attached at Ser-938. Residues Ser-939, Ser-941, Ser-946, and Ser-948 each carry the phosphoserine; by CK2 modification. Positions 1102–1157 (FCVMHLEDRLQELYFKSKMLSEYLRGQMRVHVKELGVVLGIESSDLPLLAAVASTH) constitute a dDENN FNIP1/2-type domain. Lys-1119 participates in a covalent cross-link: Glycyl lysine isopeptide (Lys-Gly) (interchain with G-Cter in ubiquitin).

This sequence belongs to the FNIP family. Homodimer and homomultimer. Heterodimer and heteromultimer with FNIP2. Interacts with FLCN (via C-terminus). Component of the lysosomal folliculin complex (LFC), composed of FLCN, FNIP1 (or FNIP2), RagA/RRAGA or RagB/RRAGB GDP-bound, RagC/RRAGC or RagD/RRAGD GTP-bound, and Ragulator. Interacts with HSPCA and with the PRKAA1, PRKAB1 and PRKAG1 subunits of 5'-AMP-activated protein kinase (AMPK). Phosphorylated FLCN and AMPK are preferentially bound. Interacts with HSP70, STIP1, PTGES3, CDC37, BRAF, GCR and CDK4. Interacts with HSP90AA1; the interaction inhibits HSP90AA1 ATPase activity. Interacts with ATP2A2. In terms of processing, phosphorylated by AMPK in response to energetic stress. Phosphorylation by AMPK in response to mitochondrial damage promotes inactivation of the non-canonical mTORC1 signaling, nuclear translocation of TFEB and TFE3, inducing transcription of lysosomal or autophagy genes. Sequential phosphorylation by CK2 promotes its gradual interaction with HSP90AA1/Hsp90. Priming phosphorylation at Ser-938 is followed by relay phosphorylation at Ser-939, Ser-941, Ser-946 and Ser-948, promoting its gradual interaction with HSP90AA1/Hsp90. This leads to incremental inhibition of HSP90AA1/Hsp90 ATPase activity and gradual activation of both kinase and non-kinase clients. Dephosphorylated by protein phosphatase 5 (PP5), promoting glycosylation by OGT. GlcNAcylation at Ser-938 by OGT following dephosphorylation by protein phosphatase 5 (PP5) promotes ubiquitination and degradation by the proteasome. Post-translationally, ubiquitinated through 'Lys-11' linkage of ubiquitin moieties at Lys-1119 following glycosylation by OGT, leading to its degradation by the proteasome. Ubiquitinated by the CRL2(FEM1B) complex in response to reductive stress: reductive stress causes reduction of the conserved Cys degron in FNIP1, followed by zinc-binding, zinc acting as a molecular glue for recognition by the CRL2(FEM1B) complex. Ubiquitination leads to FNIP1 degradation, and activation of mitochondria to recalibrate reactive oxygen species (ROS). In terms of processing, oxidation of the Cys degron in normal conditions promotes its stabilization by preventing recognition and ubiquitination by the CRL2(FEM1B) complex. As to expression, strong expression is found in the heart, liver placenta, muscle, nasal mucosa, salivary gland and uvula and moderate expression in kidney and lung. Higher levels detected in clear cell renal cell carcinoma (RCC) and chromophobe RCC than in normal kidney tissue. Expressed in peripheral blood mononuclear cells.

It is found in the lysosome membrane. Its subcellular location is the cytoplasm. It localises to the cytosol. Functionally, binding partner of the GTPase-activating protein FLCN: involved in the cellular response to amino acid availability by regulating the non-canonical mTORC1 signaling cascade controlling the MiT/TFE factors TFEB and TFE3. Required to promote FLCN recruitment to lysosomes and interaction with Rag GTPases, leading to activation of the non-canonical mTORC1 signaling. In low-amino acid conditions, component of the lysosomal folliculin complex (LFC) on the membrane of lysosomes, which inhibits the GTPase-activating activity of FLCN, thereby inactivating mTORC1 and promoting nuclear translocation of TFEB and TFE3. Upon amino acid restimulation, disassembly of the LFC complex liberates the GTPase-activating activity of FLCN, leading to activation of mTORC1 and subsequent inactivation of TFEB and TFE3. Together with FLCN, regulates autophagy: following phosphorylation by ULK1, interacts with GABARAP and promotes autophagy. In addition to its role in mTORC1 signaling, also acts as a co-chaperone of HSP90AA1/Hsp90: following gradual phosphorylation by CK2, inhibits the ATPase activity of HSP90AA1/Hsp90, leading to activate both kinase and non-kinase client proteins of HSP90AA1/Hsp90. Acts as a scaffold to load client protein FLCN onto HSP90AA1/Hsp90. Competes with the activating co-chaperone AHSA1 for binding to HSP90AA1, thereby providing a reciprocal regulatory mechanism for chaperoning of client proteins. Also acts as a core component of the reductive stress response by inhibiting activation of mitochondria in normal conditions: in response to reductive stress, the conserved Cys degron is reduced, leading to recognition and polyubiquitylation by the CRL2(FEM1B) complex, followed by proteasomal. Required for B-cell development. This is Folliculin-interacting protein 1 from Homo sapiens (Human).